The primary structure comprises 279 residues: Phosphatidylglycerol--prolipoprotein diacylglyceryl transferase (279 aa).

Transmembrane regions (helical) follow at residues 18-38 (LSVR…YFVA), 55-75 (IIFY…VIFQ), and 89-109 (IWHG…AGVI). Position 137 (R137) interacts with a 1,2-diacyl-sn-glycero-3-phospho-(1'-sn-glycerol). 2 helical membrane-spanning segments follow: residues 203 to 223 (LGET…FIEG) and 235 to 255 (IRVA…LIVY).

Belongs to the Lgt family.

Its subcellular location is the cell membrane. The catalysed reaction is L-cysteinyl-[prolipoprotein] + a 1,2-diacyl-sn-glycero-3-phospho-(1'-sn-glycerol) = an S-1,2-diacyl-sn-glyceryl-L-cysteinyl-[prolipoprotein] + sn-glycerol 1-phosphate + H(+). It participates in protein modification; lipoprotein biosynthesis (diacylglyceryl transfer). Catalyzes the transfer of the diacylglyceryl group from phosphatidylglycerol to the sulfhydryl group of the N-terminal cysteine of a prolipoprotein, the first step in the formation of mature lipoproteins. This chain is Phosphatidylglycerol--prolipoprotein diacylglyceryl transferase, found in Staphylococcus aureus (strain USA300).